The following is a 600-amino-acid chain: Adenine deaminase 3 (600 aa).

This sequence belongs to the metallo-dependent hydrolases superfamily. Adenine deaminase family. The cofactor is Mn(2+).

It carries out the reaction adenine + H2O + H(+) = hypoxanthine + NH4(+). This chain is Adenine deaminase 3, found in Rhizobium johnstonii (strain DSM 114642 / LMG 32736 / 3841) (Rhizobium leguminosarum bv. viciae).